A 467-amino-acid chain; its full sequence is MKHAIKNIHFIGLGGSGMSGIAEVLHNLGYVISGSDLSDSATLQRLARLGIKTFVGHAASNLAKVDAVVTSTAVQADNPEVLAAREKRIPVVPRALMLAELMRLKQGIAIAGTHGKTTTTSLVASVLAEAGLDPTFVIGGRLNSAGANARLGLGDYIVVEADESDASFLNLLPVMAVVTNIDADHMETYGHDFANLKKAFVDFLHRMPFYGTAILCTDDPAVREIVPQVSCPITSYGFGEDAQVRAVNVRPVGAQMHFTAQRRNGVTLPDLEVVLNLAGEHNVLNALSAIAVAVELNVPDTAVQKALAEFKGVGRRFQSYGDVPAKGGGHFTVIEDYGHHPVEVAATLAAARGAFPGRRLVLAFQPHRYTRTRDCFEDFVKVIGQADAVLLAEVYAAGETPIVAADGRSLARALRVAGKLEPVFVSEIDAMPQAILDNALGGDVVMCMGAGSIGLVPGKLLELEGAQ.

Residue 112–118 participates in ATP binding; it reads GTHGKTT.

The protein belongs to the MurCDEF family.

The protein localises to the cytoplasm. It carries out the reaction UDP-N-acetyl-alpha-D-muramate + L-alanine + ATP = UDP-N-acetyl-alpha-D-muramoyl-L-alanine + ADP + phosphate + H(+). Its pathway is cell wall biogenesis; peptidoglycan biosynthesis. Cell wall formation. The polypeptide is UDP-N-acetylmuramate--L-alanine ligase (Polaromonas sp. (strain JS666 / ATCC BAA-500)).